A 301-amino-acid chain; its full sequence is MKDISFSVVIPAYNASESIITTLDCLNEQSYKNFDVIIVDDKSADAQKLAEVVSSERYSGLKINLVLSETKLNGAGARNRGIDLATGDYVCFLDADDEWHKDKLQQNLSLIERLEGQGDRRFIIYSQVNIIQDGSFLKVMPLKPVGEHESIAEYLFGCYGFIQTSTIVLKREDAAEIRFDERYIRHQDYDLCIRADKLGFKFVMIAQPLANYHMVTRFGSQHKGESVKYSLFWLDAMKPHLTRRDVYTYKAYKLPLRYKMDGKSLQASLSFARYFFLTNKDNRNDFLKRLMNKLRTRLTGK.

Belongs to the glycosyltransferase 2 family.

The protein operates within glycan metabolism; exopolysaccharide biosynthesis. In terms of biological role, involved in the biosynthesis of amylovoran, which functions as a virulence factor. May function as a glycosyl transferase which transfers galactose from UDP-galactose to a lipid-linked amylovoran-subunit precursor. This is Amylovoran biosynthesis glycosyltransferase AmsB (amsB) from Erwinia amylovora (Fire blight bacteria).